The chain runs to 165 residues: Short form salivary protein D7R4 (165 aa).

The signal sequence occupies residues 1 to 21 (MIRQVITSYFLTVCLLALVQG). Intrachain disulfides connect C27-C59, C40-C165, and C98-C117. 2 residues coordinate noradrenaline: E28 and R43. E28 contributes to the serotonin binding site. Serotonin is bound by residues H56, Y115, D132, and E135. Positions 115, 132, and 135 each coordinate histamine. Tryptamine-binding residues include Y115, D132, and E135. Noradrenaline is bound by residues D132 and E135.

This sequence belongs to the PBP/GOBP family. In terms of tissue distribution, female saliva (at protein level). Female salivary gland. Not detected in female carcass without salivary glands. Not detected in male tissues.

The protein localises to the secreted. Functionally, modulates blood feeding of female mosquitoes on vertebrate species by binding and sequestering different mediators involved in the host response. Binds serotonin, noradrenaline, histamine and tryptamine. Inhibits histamine-, serotonin- and partially noradrenaline-induced smooth muscle contraction. Exhibits vasodilating activity. The polypeptide is Short form salivary protein D7R4 (Anopheles gambiae (African malaria mosquito)).